Reading from the N-terminus, the 1477-residue chain is Lysine-specific demethylase rbr-2 (1477 aa).

The segment at 1–37 (MRARRQENSISTPSAPSTSTSPRKKASIGNSRSKNHG) is disordered. The span at 9–21 (SISTPSAPSTSTS) shows a compositional bias: low complexity. Residues 56 to 97 (APIYYPTEEEFSDPIEYVAKIRHEAEKFGVVKIVPPANFKPP) form the JmjN domain. The 98-residue stretch at 121–218 (VKEKHTFIDR…HIEPFNRNLK (98 aa)) folds into the ARID domain. Residues 222-314 (MKNDDESDDE…KAEGDDDDDE (93 aa)) form a disordered region. Basic and acidic residues predominate over residues 246–259 (MRTEIEVPNDKTTE). 2 stretches are compositionally biased toward basic residues: residues 272–283 (GRRRSKNKKASS) and 295–304 (NSTRGRKNKK). The PHD-type 1 zinc finger occupies 319–371 (QVFCVACNEGKDEDLLLLCDIDGCNNGRHTYCCDPVLDEVPEGEWRCPKCIES). A JmjC domain is found at 468–634 (QYASHAWNLN…KGRECVESYS (167 aa)). 3 residues coordinate Fe cation: histidine 514, aspartate 517, and histidine 602. Positions 874–926 (IIDKLEKWMEQVEMWRNRAKDAIYREQEYSKEEIEKIIEEGDEYDIKLEEIDE) form a coiled coil. The segment at 1203-1257 (LEACSCLGFNKSDDSESTLTCIMCDSEFHVRCCEWSPFLEKLPEGCFLCVRCLRG) adopts a PHD-type 2 zinc-finger fold. Positions 1375–1404 (TAKRKRPSVSHKETSKKSRKRQSQASPSEY) are disordered. Residues 1411–1466 (FKSCQARACLKPYGDSVNWVMCEAGCKNWFHVICLGFTLREINDMHEYRCSSCLDH) form a PHD-type 3 zinc finger.

This sequence belongs to the JARID1 histone demethylase family. Fe(2+) serves as cofactor.

It is found in the nucleus. It carries out the reaction N(6),N(6),N(6)-trimethyl-L-lysyl(4)-[histone H3] + 3 2-oxoglutarate + 3 O2 = L-lysyl(4)-[histone H3] + 3 formaldehyde + 3 succinate + 3 CO2. In terms of biological role, histone demethylase that specifically demethylates 'Lys-4' of histone H3, thereby playing a central role in histone code. Does not demethylate histone H3 'Lys-9', H3 'Lys-27', H3 'Lys-36', H3 'Lys-79' or H4 'Lys-20'. Demethylates trimethylated and dimethylated but not monomethylated H3 'Lys-4'. Required for normal longevity of the soma in a germline-dependent manner. Implicated in the epigenetic inheritance of lifespan over several generations. Involved in larval development and vulva formation. This is Lysine-specific demethylase rbr-2 (rbr-2) from Caenorhabditis elegans.